A 488-amino-acid chain; its full sequence is Ribulose bisphosphate carboxylase large chain (488 aa).

Substrate contacts are provided by Asn128 and Thr178. Catalysis depends on Lys180, which acts as the Proton acceptor. Lys182 lines the substrate pocket. Residues Lys206, Asp208, and Glu209 each coordinate Mg(2+). An N6-carboxylysine modification is found at Lys206. His298 functions as the Proton acceptor in the catalytic mechanism. Positions 299, 331, and 383 each coordinate substrate.

The protein belongs to the RuBisCO large chain family. Type I subfamily. In terms of assembly, heterohexadecamer of 8 large chains and 8 small chains. It depends on Mg(2+) as a cofactor.

It carries out the reaction 2 (2R)-3-phosphoglycerate + 2 H(+) = D-ribulose 1,5-bisphosphate + CO2 + H2O. The catalysed reaction is D-ribulose 1,5-bisphosphate + O2 = 2-phosphoglycolate + (2R)-3-phosphoglycerate + 2 H(+). In terms of biological role, ruBisCO catalyzes two reactions: the carboxylation of D-ribulose 1,5-bisphosphate, the primary event in carbon dioxide fixation, as well as the oxidative fragmentation of the pentose substrate. Both reactions occur simultaneously and in competition at the same active site. The protein is Ribulose bisphosphate carboxylase large chain of Xanthobacter autotrophicus (strain ATCC BAA-1158 / Py2).